A 308-amino-acid chain; its full sequence is D-alanine--D-alanine ligase (308 aa).

The region spanning 103–302 is the ATP-grasp domain; sequence KTVMKTAGVP…FDELVQWMVE (200 aa). An ATP-binding site is contributed by 130-184; the sequence is MEPPYVIKPVADGSSVGVYIITEQHQHPPQELFRDDWAYGDKLLVEKYVAGKELT. The Mg(2+) site is built by Asp-252, Glu-269, and Asn-271.

It belongs to the D-alanine--D-alanine ligase family. Mg(2+) is required as a cofactor. The cofactor is Mn(2+).

It localises to the cytoplasm. It catalyses the reaction 2 D-alanine + ATP = D-alanyl-D-alanine + ADP + phosphate + H(+). It functions in the pathway cell wall biogenesis; peptidoglycan biosynthesis. Its function is as follows. Cell wall formation. This is D-alanine--D-alanine ligase from Rhodopseudomonas palustris (strain BisA53).